Here is a 525-residue protein sequence, read N- to C-terminus: Light-independent protochlorophyllide reductase subunit B (525 aa).

Residue Asp36 coordinates [4Fe-4S] cluster. Asp290 serves as the catalytic Proton donor. A substrate-binding site is contributed by 425-426 (GL).

This sequence belongs to the ChlB/BchB/BchZ family. In terms of assembly, protochlorophyllide reductase is composed of three subunits; ChlL, ChlN and ChlB. Forms a heterotetramer of two ChlB and two ChlN subunits. Requires [4Fe-4S] cluster as cofactor.

The catalysed reaction is chlorophyllide a + oxidized 2[4Fe-4S]-[ferredoxin] + 2 ADP + 2 phosphate = protochlorophyllide a + reduced 2[4Fe-4S]-[ferredoxin] + 2 ATP + 2 H2O. It functions in the pathway porphyrin-containing compound metabolism; chlorophyll biosynthesis (light-independent). In terms of biological role, component of the dark-operative protochlorophyllide reductase (DPOR) that uses Mg-ATP and reduced ferredoxin to reduce ring D of protochlorophyllide (Pchlide) to form chlorophyllide a (Chlide). This reaction is light-independent. The NB-protein (ChlN-ChlB) is the catalytic component of the complex. The chain is Light-independent protochlorophyllide reductase subunit B from Prochlorococcus marinus (strain MIT 9312).